The chain runs to 520 residues: Transactivator/viroplasmin protein (520 aa).

Disordered stretches follow at residues 103–126 and 487–520; these read SDFLRPHQGIPIPPKPEPSSSVAP and EDASADSGPKDGPPPTRSIVEKEDVPTTSSKQVD.

It belongs to the caulimoviridae viroplasmin family.

The protein resides in the host cytoplasm. Enhances the ribosomal termination-reinitiation event leading to the translation of major open reading frames on the polycistronic viral RNAs. In Arabidopsis thaliana (Mouse-ear cress), this protein is Transactivator/viroplasmin protein.